A 587-amino-acid polypeptide reads, in one-letter code: Aspartate--tRNA ligase (587 aa).

Residue glutamate 174 coordinates L-aspartate. Residues 198–201 are aspartate; the sequence is QITK. Position 220 (arginine 220) interacts with L-aspartate. Residues 220–222 and glutamine 229 each bind ATP; that span reads RDE. L-aspartate is bound at residue histidine 443. Glutamate 477 contacts ATP. Position 484 (arginine 484) interacts with L-aspartate. 529 to 532 is an ATP binding site; the sequence is GLDR.

Belongs to the class-II aminoacyl-tRNA synthetase family. Type 1 subfamily. Homodimer.

It localises to the cytoplasm. The catalysed reaction is tRNA(Asp) + L-aspartate + ATP = L-aspartyl-tRNA(Asp) + AMP + diphosphate. Catalyzes the attachment of L-aspartate to tRNA(Asp) in a two-step reaction: L-aspartate is first activated by ATP to form Asp-AMP and then transferred to the acceptor end of tRNA(Asp). The polypeptide is Aspartate--tRNA ligase (Streptococcus pneumoniae serotype 4 (strain ATCC BAA-334 / TIGR4)).